The sequence spans 357 residues: uncharacterized protein (357 aa).

The region spanning 27–196 (LVCEGGGQRG…SDAIPVKEAA (170 aa)) is the PNPLA domain. The GXGXXG signature appears at 31 to 36 (GGGQRG). The GXSXG signature appears at 59–63 (GTSAG). Ser61 acts as the Nucleophile in catalysis. The Proton acceptor role is filled by Asp183. Positions 183 to 185 (DGG) match the DGA/G motif.

In terms of biological role, probable lipid hydrolase. This is an uncharacterized protein from Escherichia coli (strain K12).